Reading from the N-terminus, the 37-residue chain is Large ribosomal subunit protein bL36c (37 aa).

The protein belongs to the bacterial ribosomal protein bL36 family.

It localises to the plastid. The protein localises to the chloroplast. The sequence is that of Large ribosomal subunit protein bL36c from Cucumis sativus (Cucumber).